A 252-amino-acid chain; its full sequence is Uridylate kinase (252 aa).

Lysine 23 to glycine 26 contacts ATP. Residue glycine 65 participates in UMP binding. Residues glycine 66 and arginine 70 each contribute to the ATP site. Residues aspartate 85 and leucine 146–threonine 153 each bind UMP. The ATP site is built by threonine 173, glutamine 174, tyrosine 179, and aspartate 182.

The protein belongs to the UMP kinase family. As to quaternary structure, homohexamer.

Its subcellular location is the cytoplasm. The enzyme catalyses UMP + ATP = UDP + ADP. The protein operates within pyrimidine metabolism; CTP biosynthesis via de novo pathway; UDP from UMP (UMPK route): step 1/1. Its activity is regulated as follows. Inhibited by UTP. Its function is as follows. Catalyzes the reversible phosphorylation of UMP to UDP. This Thermobifida fusca (strain YX) protein is Uridylate kinase.